The primary structure comprises 390 residues: Elongation factor Ts, mitochondrial (390 aa).

This sequence belongs to the EF-Ts family.

The protein localises to the mitochondrion. Its function is as follows. Associates with the EF-Tu.GDP complex and induces the exchange of GDP to GTP. It remains bound to the aminoacyl-tRNA.EF-Tu.GTP complex up to the GTP hydrolysis stage on the ribosome. In Plasmodium falciparum (isolate 3D7), this protein is Elongation factor Ts, mitochondrial.